Consider the following 212-residue polypeptide: Abscisic acid receptor PYL10 (212 aa).

Positions 34-191 (YAVGPGQCSS…NLQKLKSVSE (158 aa)) are START-like. Abscisate contacts are provided by residues lysine 70, 107 to 112 (ASTSTE), 134 to 140 (RLRNYRS), and glutamate 156. The Gate loop signature appears at 103–107 (SGLPA). The short motif at 133 to 135 (HRL) is the Latch loop element.

Belongs to the PYR/PYL/RCAR abscisic acid intracellular receptor family. In terms of assembly, homodimer. Interacts with PP2C53. Binding to PP2C53 is dependent on the presence of abscisic acid (ABA). Interacts with PP2C50. Binding to PP2C50 is dependent on the presence of ABA.

The protein localises to the cytoplasm. It localises to the cytosol. Its subcellular location is the nucleus. Its function is as follows. Inhibits the protein phosphatases PP2C06 and PP2C09 when activated by abscisic acid (ABA). Together with PP2C53, SAPK8 and SAPK10, may form an ABA signaling module involved in stress response. This Oryza sativa subsp. japonica (Rice) protein is Abscisic acid receptor PYL10.